The primary structure comprises 83 residues: Retinal cone rhodopsin-sensitive cGMP 3',5'-cyclic phosphodiesterase subunit gamma (83 aa).

The segment covering 1 to 19 has biased composition (low complexity); it reads MSDNTTLAPPAASQAPATP. A disordered region spans residues 1 to 51; the sequence is MSDNTTLAPPAASQAPATPRKGPPKFKQRQTRQFKSKPPKKGVKGFGDDIP. The span at 22–43 shows a compositional bias: basic residues; that stretch reads GPPKFKQRQTRQFKSKPPKKGV.

The protein belongs to the rod/cone cGMP-PDE gamma subunit family. In terms of assembly, tetramer composed of two catalytic chains (alpha and beta), and two inhibitory chains (gamma).

It carries out the reaction 3',5'-cyclic GMP + H2O = GMP + H(+). Participates in processes of transmission and amplification of the visual signal. cGMP-PDEs are the effector molecules in G-protein-mediated phototransduction in vertebrate rods and cones. The polypeptide is Retinal cone rhodopsin-sensitive cGMP 3',5'-cyclic phosphodiesterase subunit gamma (PDE6H) (Ictidomys tridecemlineatus (Thirteen-lined ground squirrel)).